A 303-amino-acid chain; its full sequence is Glutamyl-Q tRNA(Asp) synthetase (303 aa).

L-glutamate contacts are provided by residues 9–13 and E45; that span reads RFAPS. The 'HIGH' region signature appears at 12–22; the sequence is PSPSGSLHFGS. Zn(2+)-binding residues include C101, C103, Y115, and C119. Residues Y172 and R190 each contribute to the L-glutamate site. A 'KMSKS' region motif is present at residues 228–232; that stretch reads KLSKQ. K231 provides a ligand contact to ATP.

It belongs to the class-I aminoacyl-tRNA synthetase family. GluQ subfamily. Zn(2+) serves as cofactor.

In terms of biological role, catalyzes the tRNA-independent activation of glutamate in presence of ATP and the subsequent transfer of glutamate onto a tRNA(Asp). Glutamate is transferred on the 2-amino-5-(4,5-dihydroxy-2-cyclopenten-1-yl) moiety of the queuosine in the wobble position of the QUC anticodon. In Serratia proteamaculans (strain 568), this protein is Glutamyl-Q tRNA(Asp) synthetase.